A 393-amino-acid chain; its full sequence is Ethanol acetyltransferase 1 (393 aa).

Residues 1–25 (MHFTRTLFNQVASKASRQLPVQKRV) constitute a mitochondrion transit peptide. The region spanning 49–151 (PIVFVHGIFG…GVIIDNSPIE (103 aa)) is the AB hydrolase-1 domain. Catalysis depends on charge relay system residues Ser-122, Asp-146, and His-296. A compositionally biased stretch (basic and acidic residues) spans 343 to 354 (AKHAQQIEELRK). Residues 343–393 (AKHAQQIEELRKVTSTSESSIPHSTQSSEQAFTENIDLARQEREHQKSVSA) are disordered. Polar residues predominate over residues 355–375 (VTSTSESSIPHSTQSSEQAFT). Residues 379-393 (DLARQEREHQKSVSA) are compositionally biased toward basic and acidic residues.

This sequence belongs to the AB hydrolase superfamily.

The protein resides in the mitochondrion. The catalysed reaction is ethanol + acetyl-CoA = ethyl acetate + CoA. The enzyme catalyses acetyl-CoA + H2O = acetate + CoA + H(+). It catalyses the reaction ethyl acetate + H2O = ethanol + acetate + H(+). In terms of biological role, alcohol acetyltransferase that catalyzes the synthesis of ethyl acetate from ethanol and acetyl-CoA. Can also function as a thioesterase by hydrolyzing acetyl-CoA in the absence of ethanol, as well as esterase hydrolyzing ethyl acetate. This is Ethanol acetyltransferase 1 (EAT1) from Wickerhamomyces ciferrii (strain ATCC 14091 / BCRC 22168 / CBS 111 / JCM 3599 / NBRC 0793 / NRRL Y-1031 F-60-10) (Yeast).